The chain runs to 308 residues: Ornithine carbamoyltransferase (308 aa).

Carbamoyl phosphate is bound by residues 57–60 (STRT), Gln-84, Arg-108, and 135–138 (HPCQ). L-ornithine is bound by residues Asn-166, Asp-224, and 228–229 (SM). Residues 264-265 (CL) and Arg-292 each bind carbamoyl phosphate.

The protein belongs to the aspartate/ornithine carbamoyltransferase superfamily. OTCase family.

It is found in the cytoplasm. The catalysed reaction is carbamoyl phosphate + L-ornithine = L-citrulline + phosphate + H(+). It functions in the pathway amino-acid biosynthesis; L-arginine biosynthesis; L-arginine from L-ornithine and carbamoyl phosphate: step 1/3. In terms of biological role, reversibly catalyzes the transfer of the carbamoyl group from carbamoyl phosphate (CP) to the N(epsilon) atom of ornithine (ORN) to produce L-citrulline. This Ralstonia nicotianae (strain ATCC BAA-1114 / GMI1000) (Ralstonia solanacearum) protein is Ornithine carbamoyltransferase.